A 462-amino-acid polypeptide reads, in one-letter code: Amino-acid permease AapA (462 aa).

12 helical membrane-spanning segments follow: residues 27–47 (LMAI…KSIH), 48–68 (FAGP…FFIM), 96–116 (AAFI…MADL), 134–154 (LPGL…VKLF), 160–180 (WFAL…ILLI), 209–229 (GFIL…LVGL), 252–272 (ILLF…WNVL), 279–299 (FVQV…NFVV), 343–363 (ALFF…LMPE), 366–386 (FTLI…ITVI), 410–430 (PLSN…LALA), and 435–455 (IALF…KVQT).

This sequence belongs to the amino acid-polyamine-organocation (APC) superfamily.

It localises to the cell membrane. Its function is as follows. Probable amino-acid or metabolite transport protein. This chain is Amino-acid permease AapA (aapA), found in Bacillus subtilis (strain 168).